The sequence spans 246 residues: MGESPKGLRKGTWTTEEDILLRQCIDKYGEGKWHRVPLRTGLNRCRKSCRLRWLNYLKPSIKRGKLCSDEVDLVLRLHKLLGNRWSLIAGRLPGRTANDVKNYWNTHLSKKHDERCCKTKMINKNITSHPTSSAQKIDVLKPRPRSFSDKNSCNDVNILPKVDVVPLHLGLNNNYVCESSITCNKDEQKDKLININLLDGDNMWWESLLEADVLGPEATETAKGVTLPLDFEQIWARFDEETLELN.

HTH myb-type domains follow at residues 5–61 (PKGL…KPSI) and 62–112 (KRGK…SKKH). 2 consecutive DNA-binding regions (H-T-H motif) follow at residues 33-57 (WHRVPLRTGLNRCRKSCRLRWLNYL) and 85-108 (WSLIAGRLPGRTANDVKNYWNTHL).

In terms of assembly, interacts with BHLH002/EGL3/MYC146, BHLH012/MYC1 and BHLH042/TT8.

It is found in the nucleus. In terms of biological role, transcription activator, when associated with BHLH002/EGL3/MYC146, BHLH012/MYC1, or BHLH042/TT8. In Arabidopsis thaliana (Mouse-ear cress), this protein is Transcription factor MYB113 (MYB113).